Here is a 198-residue protein sequence, read N- to C-terminus: Na(+)-translocating NADH-quinone reductase subunit E (198 aa).

Helical transmembrane passes span 11–31, 35–55, 77–97, 110–130, 140–160, and 176–196; these read SVFIENMALSFFLGMCTFLAV, VSTSFGLGIAVIVVLGIAVPV, FLNFITFIGVIAALVQILEMF, GIFLPLITVNCAIFGGVSFMV, VVYGIGAGTGWMLAIVALAGL, and LGITFITVGLMALGFMSFSGI.

Belongs to the NqrDE/RnfAE family. In terms of assembly, composed of six subunits; NqrA, NqrB, NqrC, NqrD, NqrE and NqrF.

It is found in the cell inner membrane. The catalysed reaction is a ubiquinone + n Na(+)(in) + NADH + H(+) = a ubiquinol + n Na(+)(out) + NAD(+). Functionally, NQR complex catalyzes the reduction of ubiquinone-1 to ubiquinol by two successive reactions, coupled with the transport of Na(+) ions from the cytoplasm to the periplasm. NqrA to NqrE are probably involved in the second step, the conversion of ubisemiquinone to ubiquinol. This is Na(+)-translocating NADH-quinone reductase subunit E from Actinobacillus succinogenes (strain ATCC 55618 / DSM 22257 / CCUG 43843 / 130Z).